Consider the following 65-residue polypeptide: Photosystem II reaction center protein Z (65 aa).

The next 2 membrane-spanning stretches (helical) occupy residues 11–31 (LVLALIIFSFILVLTLPVIFA) and 44–64 (WLACRFWFFLVFLIGILDGIF).

This sequence belongs to the PsbZ family. PSII is composed of 1 copy each of membrane proteins PsbA, PsbB, PsbC, PsbD, PsbE, PsbF, PsbH, PsbI, PsbJ, PsbK, PsbL, PsbM, PsbT, PsbY, PsbZ, Psb30/Ycf12, at least 3 peripheral proteins of the oxygen-evolving complex and a large number of cofactors. It forms dimeric complexes.

It localises to the plastid. It is found in the chloroplast thylakoid membrane. In terms of biological role, may control the interaction of photosystem II (PSII) cores with the light-harvesting antenna, regulates electron flow through the 2 photosystem reaction centers. PSII is a light-driven water plastoquinone oxidoreductase, using light energy to abstract electrons from H(2)O, generating a proton gradient subsequently used for ATP formation. The polypeptide is Photosystem II reaction center protein Z (Euglena gracilis).